The sequence spans 530 residues: Arginine-containing cyclodipeptide synthase pthA (530 aa).

A Conserved DDXXE motif motif is present at residues 419-423 (DDRAE).

It belongs to the arginine-containing cyclodipeptide synthase family.

The enzyme catalyses L-aspartyl-tRNA(Asp) + L-arginyl-tRNA(Arg) = cyclo(L-arginyl-L-aspartyl) + tRNA(Asp) + tRNA(Arg) + 2 H(+). Its pathway is secondary metabolite biosynthesis. Its function is as follows. Arginine-containing cyclodipeptide synthase; part of the cluster that mediates the biosynthesis of a highly modified cyclo-arginine-aspartate dipeptide (cRD). Within the pathway, pthA acts as the scaffold-generating enzyme and is responsible for formation of the cyclo-Arg-Asp diketopiperazine (cRW) from L-arginyl-tRNA(Arg) + L-aspartyl-tRNA(Asp). Additional enzymes from the cluster then further modify the cyclo-Arg-Asp diketopiperazine (cRW) scaffold. The protein is Arginine-containing cyclodipeptide synthase pthA of Penicillium thymicola.